Reading from the N-terminus, the 158-residue chain is Ribosomal RNA large subunit methyltransferase H (158 aa).

S-adenosyl-L-methionine is bound by residues leucine 73, glycine 107, and 126 to 131 (FGEITL).

This sequence belongs to the RNA methyltransferase RlmH family. In terms of assembly, homodimer.

The protein localises to the cytoplasm. It catalyses the reaction pseudouridine(1915) in 23S rRNA + S-adenosyl-L-methionine = N(3)-methylpseudouridine(1915) in 23S rRNA + S-adenosyl-L-homocysteine + H(+). In terms of biological role, specifically methylates the pseudouridine at position 1915 (m3Psi1915) in 23S rRNA. This chain is Ribosomal RNA large subunit methyltransferase H, found in Rubrobacter xylanophilus (strain DSM 9941 / JCM 11954 / NBRC 16129 / PRD-1).